The primary structure comprises 104 residues: uncharacterized protein (104 aa).

This is an uncharacterized protein from Homo sapiens (Human).